The sequence spans 213 residues: Guanylate kinase (213 aa).

Residues 6–186 (GLLIILSSPS…TEERLKTIVS (181 aa)) enclose the Guanylate kinase-like domain. Position 13-20 (13-20 (SPSGAGKS)) interacts with ATP.

It belongs to the guanylate kinase family.

It is found in the cytoplasm. The catalysed reaction is GMP + ATP = GDP + ADP. In terms of biological role, essential for recycling GMP and indirectly, cGMP. This chain is Guanylate kinase, found in Ruegeria pomeroyi (strain ATCC 700808 / DSM 15171 / DSS-3) (Silicibacter pomeroyi).